The primary structure comprises 71 residues: MLLLYTVMILTCIIYKLVPDNKYWPIHMFFFIMIYIVYMYEKLDIHEKSQFWNYTMARLSGHPVPTIICNC.

At M1–K16 the chain is on the cytoplasmic side. The helical transmembrane segment at L17–Y38 threads the bilayer. Residues M39 to C69 are Extracellular-facing. N-linked (GlcNAc...) asparagine; by host glycosylation is present at N53.

The protein belongs to the asfivirus X69R family.

The protein localises to the host membrane. This is an uncharacterized protein from African swine fever virus (isolate Pig/Kenya/KEN-50/1950) (ASFV).